The chain runs to 287 residues: Cysteine-rich repeat secretory protein 59 (287 aa).

An N-terminal signal peptide occupies residues 1–26 (METTKKLSPIFCFSSLLCLFFTMNQA). 2 Gnk2-homologous domains span residues 32–134 (HMDT…DKFF) and 140–250 (KKPN…ITTS). N43, N47, N63, N72, N93, N103, N111, and N212 each carry an N-linked (GlcNAc...) asparagine glycan.

Belongs to the cysteine-rich repeat secretory protein family.

It is found in the secreted. In Arabidopsis thaliana (Mouse-ear cress), this protein is Cysteine-rich repeat secretory protein 59 (CRRSP59).